Consider the following 233-residue polypeptide: Purine nucleoside phosphorylase DeoD-type (233 aa).

H4 contributes to the a purine D-ribonucleoside binding site. Residues G20, R24, R43, and 87 to 90 each bind phosphate; that span reads RIGT. Residues 179 to 181 and 203 to 204 each bind a purine D-ribonucleoside; these read EME and SD. The active-site Proton donor is the D204.

This sequence belongs to the PNP/UDP phosphorylase family. In terms of assembly, homohexamer; trimer of homodimers.

It carries out the reaction a purine D-ribonucleoside + phosphate = a purine nucleobase + alpha-D-ribose 1-phosphate. The catalysed reaction is a purine 2'-deoxy-D-ribonucleoside + phosphate = a purine nucleobase + 2-deoxy-alpha-D-ribose 1-phosphate. Its function is as follows. Catalyzes the reversible phosphorolytic breakdown of the N-glycosidic bond in the beta-(deoxy)ribonucleoside molecules, with the formation of the corresponding free purine bases and pentose-1-phosphate. This chain is Purine nucleoside phosphorylase DeoD-type, found in Helicobacter pylori (strain P12).